Reading from the N-terminus, the 138-residue chain is Cysteine desulfuration protein SufE (138 aa).

C51 functions as the Cysteine persulfide intermediate in the catalytic mechanism.

The protein belongs to the SufE family. As to quaternary structure, homodimer. Interacts with SufS.

The protein localises to the cytoplasm. It functions in the pathway cofactor biosynthesis; iron-sulfur cluster biosynthesis. Participates in cysteine desulfuration mediated by SufS. Cysteine desulfuration mobilizes sulfur from L-cysteine to yield L-alanine and constitutes an essential step in sulfur metabolism for biosynthesis of a variety of sulfur-containing biomolecules. Functions as a sulfur acceptor for SufS, by mediating the direct transfer of the sulfur atom from the S-sulfanylcysteine of SufS, an intermediate product of cysteine desulfuration process. This Escherichia coli O8 (strain IAI1) protein is Cysteine desulfuration protein SufE.